Consider the following 290-residue polypeptide: Bifunctional protein FolD (290 aa).

NADP(+)-binding positions include 167–169, S192, and I233; that span reads GRS.

It belongs to the tetrahydrofolate dehydrogenase/cyclohydrolase family. Homodimer.

The enzyme catalyses (6R)-5,10-methylene-5,6,7,8-tetrahydrofolate + NADP(+) = (6R)-5,10-methenyltetrahydrofolate + NADPH. It carries out the reaction (6R)-5,10-methenyltetrahydrofolate + H2O = (6R)-10-formyltetrahydrofolate + H(+). It functions in the pathway one-carbon metabolism; tetrahydrofolate interconversion. Catalyzes the oxidation of 5,10-methylenetetrahydrofolate to 5,10-methenyltetrahydrofolate and then the hydrolysis of 5,10-methenyltetrahydrofolate to 10-formyltetrahydrofolate. This Gloeobacter violaceus (strain ATCC 29082 / PCC 7421) protein is Bifunctional protein FolD.